The primary structure comprises 123 residues: Small ribosomal subunit protein uS13 (123 aa).

Residues 97-123 (PVRGQRTRSNARTRKGPRPSRIKKKGK) form a disordered region. Positions 101-123 (QRTRSNARTRKGPRPSRIKKKGK) are enriched in basic residues.

The protein belongs to the universal ribosomal protein uS13 family. As to quaternary structure, part of the 30S ribosomal subunit. Forms a loose heterodimer with protein S19. Forms two bridges to the 50S subunit in the 70S ribosome.

Located at the top of the head of the 30S subunit, it contacts several helices of the 16S rRNA. In the 70S ribosome it contacts the 23S rRNA (bridge B1a) and protein L5 of the 50S subunit (bridge B1b), connecting the 2 subunits; these bridges are implicated in subunit movement. Contacts the tRNAs in the A and P-sites. The protein is Small ribosomal subunit protein uS13 of Fervidobacterium nodosum (strain ATCC 35602 / DSM 5306 / Rt17-B1).